Here is a 487-residue protein sequence, read N- to C-terminus: GTPase Der (487 aa).

EngA-type G domains are found at residues 3 to 166 (PVIA…IAEL) and 201 to 374 (VKLA…ESAT). GTP contacts are provided by residues 9 to 16 (GRPNVGKS), 56 to 60 (DTGGI), 118 to 121 (NKTD), 207 to 214 (GRPNVGKS), 254 to 258 (DTAGV), and 319 to 322 (NKWD). One can recognise a KH-like domain in the interval 375–459 (KRISTAMLRR…PIKIEFREGD (85 aa)).

Belongs to the TRAFAC class TrmE-Era-EngA-EngB-Septin-like GTPase superfamily. EngA (Der) GTPase family. Associates with the 50S ribosomal subunit.

Functionally, GTPase that plays an essential role in the late steps of ribosome biogenesis. The sequence is that of GTPase Der from Pseudoalteromonas translucida (strain TAC 125).